Here is a 199-residue protein sequence, read N- to C-terminus: FMN-dependent NADH:quinone oxidoreductase (199 aa).

17-19 contributes to the FMN binding site; sequence SYS.

The protein belongs to the azoreductase type 1 family. In terms of assembly, homodimer. FMN serves as cofactor.

It catalyses the reaction 2 a quinone + NADH + H(+) = 2 a 1,4-benzosemiquinone + NAD(+). The enzyme catalyses N,N-dimethyl-1,4-phenylenediamine + anthranilate + 2 NAD(+) = 2-(4-dimethylaminophenyl)diazenylbenzoate + 2 NADH + 2 H(+). Functionally, quinone reductase that provides resistance to thiol-specific stress caused by electrophilic quinones. Its function is as follows. Also exhibits azoreductase activity. Catalyzes the reductive cleavage of the azo bond in aromatic azo compounds to the corresponding amines. The polypeptide is FMN-dependent NADH:quinone oxidoreductase (Mycoplasmopsis synoviae (strain 53) (Mycoplasma synoviae)).